We begin with the raw amino-acid sequence, 379 residues long: Anhydro-N-acetylmuramic acid kinase (379 aa).

9–16 (GTSADGVD) provides a ligand contact to ATP.

It belongs to the anhydro-N-acetylmuramic acid kinase family.

The enzyme catalyses 1,6-anhydro-N-acetyl-beta-muramate + ATP + H2O = N-acetyl-D-muramate 6-phosphate + ADP + H(+). It participates in amino-sugar metabolism; 1,6-anhydro-N-acetylmuramate degradation. Its pathway is cell wall biogenesis; peptidoglycan recycling. Catalyzes the specific phosphorylation of 1,6-anhydro-N-acetylmuramic acid (anhMurNAc) with the simultaneous cleavage of the 1,6-anhydro ring, generating MurNAc-6-P. Is required for the utilization of anhMurNAc either imported from the medium or derived from its own cell wall murein, and thus plays a role in cell wall recycling. This is Anhydro-N-acetylmuramic acid kinase from Parasynechococcus marenigrum (strain WH8102).